Reading from the N-terminus, the 106-residue chain is Large ribosomal subunit protein eL42 (106 aa).

Residues 36-56 are disordered; the sequence is FAQGKRRYDRKQSGYGGQTKP.

It belongs to the eukaryotic ribosomal protein eL42 family.

The sequence is that of Large ribosomal subunit protein eL42 (RPL44) from Phaffia rhodozyma (Yeast).